Reading from the N-terminus, the 714-residue chain is Fatty acid oxidation complex subunit alpha (714 aa).

The enoyl-CoA hydratase stretch occupies residues 1-190; it reads MEMASAFTLN…KLGLVDDVVP (190 aa). A 3-hydroxyacyl-CoA dehydrogenase region spans residues 306–714; that stretch reads APLNSVGILG…FWKTTATDLQ (409 aa).

The protein in the N-terminal section; belongs to the enoyl-CoA hydratase/isomerase family. This sequence in the central section; belongs to the 3-hydroxyacyl-CoA dehydrogenase family. In terms of assembly, heterotetramer of two alpha chains (FadJ) and two beta chains (FadI).

It localises to the cytoplasm. It catalyses the reaction a (3S)-3-hydroxyacyl-CoA = a (2E)-enoyl-CoA + H2O. The enzyme catalyses a 4-saturated-(3S)-3-hydroxyacyl-CoA = a (3E)-enoyl-CoA + H2O. The catalysed reaction is a (3S)-3-hydroxyacyl-CoA + NAD(+) = a 3-oxoacyl-CoA + NADH + H(+). It carries out the reaction (3S)-3-hydroxybutanoyl-CoA = (3R)-3-hydroxybutanoyl-CoA. Its pathway is lipid metabolism; fatty acid beta-oxidation. Catalyzes the formation of a hydroxyacyl-CoA by addition of water on enoyl-CoA. Also exhibits 3-hydroxyacyl-CoA epimerase and 3-hydroxyacyl-CoA dehydrogenase activities. The sequence is that of Fatty acid oxidation complex subunit alpha from Escherichia coli O6:H1 (strain CFT073 / ATCC 700928 / UPEC).